We begin with the raw amino-acid sequence, 1776 residues long: Signal-induced proliferation-associated 1-like protein 3 (1776 aa).

Disordered regions lie at residues 41-157 and 240-325; these read AQNG…GRAF and PGAL…EASR. Over residues 54–69 the composition is skewed to low complexity; it reads PAATTTRPSPTTPAMP. Composition is skewed to polar residues over residues 89–99 and 112–129; these read EQSNPSPSQDT and RNLQNGQLPSSTPASSGS. Phosphoserine is present on S94. Basic residues predominate over residues 131–140; sequence AFHRLSRRRS. Phosphoserine is present on S140. The span at 257–268 shows a compositional bias: polar residues; the sequence is GQPTKDSLQSLQ. Phosphoserine is present on S394. Residues 438–461 form a disordered region; that stretch reads SRASVGSPGGSSEAHMAEPTLSTH. Residues 605–822 enclose the Rap-GAP domain; the sequence is LLKLDEQGLC…RTRQEYLKDL (218 aa). Residues 960-1024 form the PDZ domain; that stretch reads DMTLRRNGLG…DQMIDLLRTS (65 aa). Disordered stretches follow at residues 1040-1104, 1117-1164, and 1184-1632; these read PRRG…AQSL, RESQ…ATYA, and DPHF…LDPG. 2 stretches are compositionally biased toward polar residues: residues 1074–1104 and 1151–1160; these read APWQWSGPASHNSLPATKWTTPATPGHAQSL and PSGSFSTPGS. Residues 1190–1201 are compositionally biased toward low complexity; the sequence is DGMSSGDSSSGG. Basic and acidic residues predominate over residues 1239-1255; that stretch reads SRQDAAGKDSPNRHSKG. A compositionally biased stretch (low complexity) spans 1260 to 1275; it reads SSHSSSNTLSSNASSS. The segment covering 1298–1316 has biased composition (polar residues); it reads GGSSDSGIDTTLYTSSPSC. Basic and acidic residues predominate over residues 1344 to 1357; it reads SAGRPHPVDRRREV. At S1358 the chain carries Phosphoserine. At T1381 the chain carries Phosphothreonine. Residues 1409–1436 are compositionally biased toward polar residues; the sequence is VYKTASAETPRPSQLSQCSPFQLSTSVP. Position 1442 is an N6-acetyllysine (K1442). Residues 1503 to 1512 show a composition bias toward basic and acidic residues; that stretch reads TIEDDLKKLI. 2 stretches are compositionally biased toward polar residues: residues 1526 to 1541 and 1566 to 1578; these read GQSPQKSLQRTLSDES and LFTSTCTFPSSTL. 2 positions are modified to phosphoserine: S1538 and S1541. Residues 1589–1601 show a composition bias toward low complexity; that stretch reads PPSGAPSTTPATG. S1614 and S1617 each carry phosphoserine. Residues 1620–1630 show a composition bias toward basic and acidic residues; the sequence is DGRDRPLRRLD. S1672 bears the Phosphoserine mark. The disordered stretch occupies residues 1678–1705; that stretch reads AHSPVHSHLSLERGPQTPRATPTMSEES. A phosphothreonine mark is found at T1694 and T1698. Residues 1715-1769 adopt a coiled-coil conformation; it reads QLEVMLKQLHTDLQKEKQDKVVLQSEVASLRQNNQRLQEESQAASEQLRKFAELF.

The protein localises to the apical cell membrane. Plays a critical role in epithelial cell morphogenesis, polarity, adhesion and cytoskeletal organization in the lens. This Mus musculus (Mouse) protein is Signal-induced proliferation-associated 1-like protein 3 (Sipa1l3).